The sequence spans 197 residues: Small ribosomal subunit protein uS4c (197 aa).

The S4 RNA-binding domain maps to 92–153; sequence MRLDAVVYRL…APIVEHAKTF (62 aa).

It belongs to the universal ribosomal protein uS4 family. In terms of assembly, part of the 30S ribosomal subunit. Contacts protein S5. The interaction surface between S4 and S5 is involved in control of translational fidelity.

The protein localises to the plastid. It is found in the chloroplast. In terms of biological role, one of the primary rRNA binding proteins, it binds directly to 16S rRNA where it nucleates assembly of the body of the 30S subunit. Functionally, with S5 and S12 plays an important role in translational accuracy. The protein is Small ribosomal subunit protein uS4c (rps4) of Ostreococcus tauri.